The chain runs to 408 residues: UDP-N-acetylglucosamine--N-acetylmuramyl-(pentapeptide) pyrophosphoryl-undecaprenol N-acetylglucosamine transferase (408 aa).

The disordered stretch occupies residues 1–20; the sequence is MNDTVKKPTGGRGDDPLPAG. Residues 41 to 43, Asn-160, Arg-197, Ser-231, and Gln-327 contribute to the UDP-N-acetyl-alpha-D-glucosamine site; that span reads TAG.

Belongs to the glycosyltransferase 28 family. MurG subfamily.

Its subcellular location is the cell membrane. The enzyme catalyses di-trans,octa-cis-undecaprenyl diphospho-N-acetyl-alpha-D-muramoyl-L-alanyl-D-glutamyl-meso-2,6-diaminopimeloyl-D-alanyl-D-alanine + UDP-N-acetyl-alpha-D-glucosamine = di-trans,octa-cis-undecaprenyl diphospho-[N-acetyl-alpha-D-glucosaminyl-(1-&gt;4)]-N-acetyl-alpha-D-muramoyl-L-alanyl-D-glutamyl-meso-2,6-diaminopimeloyl-D-alanyl-D-alanine + UDP + H(+). Its pathway is cell wall biogenesis; peptidoglycan biosynthesis. Functionally, cell wall formation. Catalyzes the transfer of a GlcNAc subunit on undecaprenyl-pyrophosphoryl-MurNAc-pentapeptide (lipid intermediate I) to form undecaprenyl-pyrophosphoryl-MurNAc-(pentapeptide)GlcNAc (lipid intermediate II). This Mycobacterium avium (strain 104) protein is UDP-N-acetylglucosamine--N-acetylmuramyl-(pentapeptide) pyrophosphoryl-undecaprenol N-acetylglucosamine transferase.